Here is a 223-residue protein sequence, read N- to C-terminus: DNA mismatch repair protein MutH (223 aa).

Belongs to the MutH family.

The protein resides in the cytoplasm. Sequence-specific endonuclease that cleaves unmethylated GATC sequences. It is involved in DNA mismatch repair. The protein is DNA mismatch repair protein MutH of Shewanella oneidensis (strain ATCC 700550 / JCM 31522 / CIP 106686 / LMG 19005 / NCIMB 14063 / MR-1).